The primary structure comprises 149 residues: Arginine repressor (149 aa).

This sequence belongs to the ArgR family.

The protein localises to the cytoplasm. Its pathway is amino-acid biosynthesis; L-arginine biosynthesis [regulation]. Functionally, regulates arginine biosynthesis genes. The chain is Arginine repressor from Exiguobacterium sp. (strain ATCC BAA-1283 / AT1b).